Consider the following 112-residue polypeptide: MDGEEKTYGGCEGPDAMYVKLISSDGHEFIVKREHALTSGTIKAMLSGPGQFAENETNEVNFREIPSHVLSKVCMYFTYKVRYTNSSTEIPEFPIAPEIALELLMAANFLDC.

The protein belongs to the SKP1 family. As to quaternary structure, heterotrimer of an A (ELOA, ELOA2 or ELOA3P), ELOB and ELOC subunit. The elongin BC complex interacts with EPOP; leading to recruit the elongin BC complex to Polycomb group (PcG) target genes, thereby restricting excessive activity of the PRC2/EED-EZH2 complex. Component of multiple cullin-RING E3 ubiquitin-protein ligase complexes composed of Elongin BC (ELOB and ELOC), a cullin (CUL2 or CUL5), a catalytic subunit (RBX1 or RNF7/RBX2), as well as a substrate adapter protein that can be either ASB2, ASB9, ASB11, KLHDC2, KLHDC3, KLHDC10, APPBP2, FEM1A, FEM1B, FEM1C, LRR1, PCMTD1, SOCS1, SOCS2, SOCS5, SPSB1, SPSB3, ELOA, VHL, WSB1, ZYG11B or RAB40C. Interacts with TMF1. As part of the Elongin BC E3 ubiquitin ligase complex; interacts with NRBP1. May form oligomers as a KLHDC2/KLHDC3-ELOB-ELOC complex; this interaction is autoinhibitory for the E3 ligase complex as the substrate-binding site of KLHDC2/KLHDC3 is blocked in the oligomer. Post-translationally, ubiquitinated by the DCX(AMBRA1) complex, leading to its degradation by the proteasome.

The protein localises to the nucleus. It participates in protein modification; protein ubiquitination. Its function is as follows. SIII, also known as elongin, is a general transcription elongation factor that increases the RNA polymerase II transcription elongation past template-encoded arresting sites. Subunit A is transcriptionally active and its transcription activity is strongly enhanced by binding to the dimeric complex of the SIII regulatory subunits B and C (elongin BC complex). In embryonic stem cells, the elongin BC complex is recruited by EPOP to Polycomb group (PcG) target genes in order generate genomic region that display both active and repressive chromatin properties, an important feature of pluripotent stem cells. In terms of biological role, core component of multiple cullin-RING-based ECS (ElonginB/C-CUL2/5-SOCS-box protein) E3 ubiquitin-protein ligase complexes, which mediate the ubiquitination of target proteins. By binding to BC-box motifs it seems to link target recruitment subunits, like VHL and members of the SOCS box family, to Cullin/RBX1 modules that activate E2 ubiquitination enzymes. Component the von Hippel-Lindau ubiquitination complex CBC(VHL). A number of ECS complexes (containing either KLHDC2, KLHDC3, KLHDC10, APPBP2, FEM1A, FEM1B or FEM1C as substrate-recognition component) are part of the DesCEND (destruction via C-end degrons) pathway, which recognizes a C-degron located at the extreme C terminus of target proteins, leading to their ubiquitination and degradation. The ECS(ASB9) complex mediates ubiquitination and degradation of CKB. As part of a multisubunit ubiquitin ligase complex, polyubiquitinates monoubiquitinated POLR2A. ECS(LRR1) ubiquitinates MCM7 and promotes CMG replisome disassembly by VCP and chromatin extraction during S-phase. As part of the ECS(RAB40C) complex, mediates ANKRD28 ubiquitination and degradation, thereby inhibiting protein phosphatase 6 (PP6) complex activity and focal adhesion assembly during cell migration. This chain is Elongin-C (ELOC), found in Bos taurus (Bovine).